The sequence spans 176 residues: Large ribosomal subunit protein uL16 (176 aa).

Belongs to the universal ribosomal protein uL16 family.

The chain is Large ribosomal subunit protein uL16 from Thermoplasma volcanium (strain ATCC 51530 / DSM 4299 / JCM 9571 / NBRC 15438 / GSS1).